A 526-amino-acid polypeptide reads, in one-letter code: ATP synthase subunit alpha (526 aa).

Residue 171-178 (GDRQTGKT) coordinates ATP.

It belongs to the ATPase alpha/beta chains family. In terms of assembly, F-type ATPases have 2 components, CF(1) - the catalytic core - and CF(0) - the membrane proton channel. CF(1) has five subunits: alpha(3), beta(3), gamma(1), delta(1), epsilon(1). CF(0) has three main subunits: a(1), b(2) and c(9-12). The alpha and beta chains form an alternating ring which encloses part of the gamma chain. CF(1) is attached to CF(0) by a central stalk formed by the gamma and epsilon chains, while a peripheral stalk is formed by the delta and b chains.

The protein resides in the cell membrane. It catalyses the reaction ATP + H2O + 4 H(+)(in) = ADP + phosphate + 5 H(+)(out). In terms of biological role, produces ATP from ADP in the presence of a proton gradient across the membrane. The alpha chain is a regulatory subunit. This Christiangramia forsetii (strain DSM 17595 / CGMCC 1.15422 / KT0803) (Gramella forsetii) protein is ATP synthase subunit alpha.